The primary structure comprises 263 residues: MARGPKKHLKRVAAPKHWMLDKLTSVFAPRPSTGPHKLRECLPLIIFLRNKLKYALTGDEVKKICMQRFIKIDGKVRADITYPAGFMDVISIDKTGENFRLIYDTKGRFAVHRITPEEAKYKLCKVRKIFVGTKGIPHLVTHDARTIRYPDPLIKMNDTIQIDLETGKITDFIKFDTGNLCMVTGGANLGRIGVITNRERHPGSFDVVHVKDANGNSFATRLSNIFVIGKGNKPWISLPRGKGIRLTIAEERDKRLAAKQSSG.

The 63-residue stretch at 42-104 (LPLIIFLRNK…TGENFRLIYD (63 aa)) folds into the S4 RNA-binding domain. A Glycyl lysine isopeptide (Lys-Gly) (interchain with G-Cter in SUMO2) cross-link involves residue lysine 230. Position 233 is an N6-acetyllysine (lysine 233).

It belongs to the eukaryotic ribosomal protein eS4 family. As to quaternary structure, component of the small ribosomal subunit. Part of the small subunit (SSU) processome, composed of more than 70 proteins and the RNA chaperone small nucleolar RNA (snoRNA) U3. Identified in a IGF2BP1-dependent mRNP granule complex containing untranslated mRNAs.

It is found in the cytoplasm. The protein resides in the nucleus. The protein localises to the nucleolus. Functionally, component of the small ribosomal subunit. The ribosome is a large ribonucleoprotein complex responsible for the synthesis of proteins in the cell. Part of the small subunit (SSU) processome, first precursor of the small eukaryotic ribosomal subunit. During the assembly of the SSU processome in the nucleolus, many ribosome biogenesis factors, an RNA chaperone and ribosomal proteins associate with the nascent pre-rRNA and work in concert to generate RNA folding, modifications, rearrangements and cleavage as well as targeted degradation of pre-ribosomal RNA by the RNA exosome. This Oryctolagus cuniculus (Rabbit) protein is Small ribosomal subunit protein eS4 (RPS4X).